Here is a 216-residue protein sequence, read N- to C-terminus: MADLSTLMPALVLGVCALAGYLLGSVPFGLVLVRLAGLGDVRGIGSGNIGATNVLRTGRKDLALATLVLDSGKGAIAALVASALASRIAGFEDAVLAGLLAGGMAVVGHNFPIWLGFKGGKGVATTLGTLLATAWPVGLAACATWLVVAALFRYSSLAALVCLALAPAYALVLATPAHAAVFALLALLAWIRHRANIARLLKGEESRIGAKKKAAP.

The next 5 membrane-spanning stretches (helical) occupy residues 11–31, 62–82, 95–115, 132–152, and 171–191; these read LVLG…FGLV, LALA…LVAS, VLAG…PIWL, ATAW…AALF, and LVLA…LAWI.

The protein belongs to the PlsY family. Probably interacts with PlsX.

The protein resides in the cell inner membrane. The catalysed reaction is an acyl phosphate + sn-glycerol 3-phosphate = a 1-acyl-sn-glycero-3-phosphate + phosphate. It participates in lipid metabolism; phospholipid metabolism. Functionally, catalyzes the transfer of an acyl group from acyl-phosphate (acyl-PO(4)) to glycerol-3-phosphate (G3P) to form lysophosphatidic acid (LPA). This enzyme utilizes acyl-phosphate as fatty acyl donor, but not acyl-CoA or acyl-ACP. This chain is Glycerol-3-phosphate acyltransferase, found in Rhodospirillum rubrum (strain ATCC 11170 / ATH 1.1.1 / DSM 467 / LMG 4362 / NCIMB 8255 / S1).